The chain runs to 397 residues: LIM/homeobox protein Lhx3 (397 aa).

LIM zinc-binding domains lie at 31 to 81 (CAGC…CKDD) and 90 to 144 (CAAC…CKAD). A Phosphothreonine modification is found at Thr-63. Ser-71 is subject to Phosphoserine. The segment at residues 157–216 (AKRPRTTITAKQLETLKSAYNTSPKPARHVREQLSSETGLDMRVVQVWFQNRRAKEKRLK) is a DNA-binding region (homeobox). Positions 212–397 (EKRLKKDAGR…WLDEVDHAQF (186 aa)) are disordered. Tyr-227 is modified (phosphotyrosine). Ser-234 and Ser-238 each carry phosphoserine. The segment covering 316 to 331 (GVPPSPAAPQSLPGPQ) has biased composition (pro residues).

Interacts with POU1F1. At neuronal promoters, interacts with LDB1, in motor neurons LDB1 is displaced by ISL1 and a ternary complex is formed in which ISL1 contacts both LHX3 and LDB1; allosteric structural changes in the DNA binding domain of LHX3, induced by the ISL1-LHX3 interaction, may explain differences in sequence specificity of the different complexes. Interacts with LDB2. May interact with CITED2/MRG1.

The protein resides in the nucleus. Functionally, transcription factor. Recognizes and binds to the consensus sequence motif 5'-AATTAATTA-3' in the regulatory elements of target genes, such as glycoprotein hormones alpha chain CGA and visual system homeobox CHX10, positively modulating transcription; transcription can be co-activated by LDB2. Synergistically enhances transcription from the prolactin promoter in cooperation with POU1F1/Pit-1. Required for the establishment of the specialized cells of the pituitary gland and the nervous system. Involved in the development of interneurons and motor neurons in cooperation with LDB1 and ISL1. The protein is LIM/homeobox protein Lhx3 (LHX3) of Homo sapiens (Human).